The sequence spans 543 residues: Dipeptide-binding protein DppE (543 aa).

Residues 1 to 22 (MKRVKKLWGMGLALGLSFALMG) form the signal peptide. A lipid anchor (N-palmitoyl cysteine) is attached at C23. The S-diacylglycerol cysteine moiety is linked to residue C23.

It belongs to the bacterial solute-binding protein 5 family.

Its subcellular location is the cell membrane. Functionally, probably part of the ABC transporter DppBCDE involved in dipeptide transport. This chain is Dipeptide-binding protein DppE (dppE), found in Bacillus subtilis (strain 168).